The sequence spans 288 residues: Polyamine aminopropyltransferase (288 aa).

Residues 9 to 238 enclose the PABS domain; the sequence is ETLHDQFGQY…GIMTFAWATD (230 aa). Gln-33 lines the S-methyl-5'-thioadenosine pocket. Spermidine is bound by residues His-64 and Asp-88. S-methyl-5'-thioadenosine-binding positions include Glu-108 and 140-141; that span reads DG. Asp-158 acts as the Proton acceptor in catalysis. Position 158–161 (158–161) interacts with spermidine; sequence DCTD. Pro-165 contributes to the S-methyl-5'-thioadenosine binding site.

Belongs to the spermidine/spermine synthase family. Homodimer or homotetramer.

Its subcellular location is the cytoplasm. It carries out the reaction S-adenosyl 3-(methylsulfanyl)propylamine + putrescine = S-methyl-5'-thioadenosine + spermidine + H(+). It functions in the pathway amine and polyamine biosynthesis; spermidine biosynthesis; spermidine from putrescine: step 1/1. Catalyzes the irreversible transfer of a propylamine group from the amino donor S-adenosylmethioninamine (decarboxy-AdoMet) to putrescine (1,4-diaminobutane) to yield spermidine. This is Polyamine aminopropyltransferase from Escherichia coli (strain UTI89 / UPEC).